The sequence spans 130 residues: Phosphoribosyl-AMP cyclohydrolase (130 aa).

Mg(2+) is bound at residue Asp77. Cys78 provides a ligand contact to Zn(2+). Residues Asp79 and Asp81 each coordinate Mg(2+). Positions 95 and 102 each coordinate Zn(2+).

It belongs to the PRA-CH family. As to quaternary structure, homodimer. The cofactor is Mg(2+). It depends on Zn(2+) as a cofactor.

Its subcellular location is the cytoplasm. It catalyses the reaction 1-(5-phospho-beta-D-ribosyl)-5'-AMP + H2O = 1-(5-phospho-beta-D-ribosyl)-5-[(5-phospho-beta-D-ribosylamino)methylideneamino]imidazole-4-carboxamide. It functions in the pathway amino-acid biosynthesis; L-histidine biosynthesis; L-histidine from 5-phospho-alpha-D-ribose 1-diphosphate: step 3/9. Its function is as follows. Catalyzes the hydrolysis of the adenine ring of phosphoribosyl-AMP. In Pseudomonas savastanoi pv. phaseolicola (strain 1448A / Race 6) (Pseudomonas syringae pv. phaseolicola (strain 1448A / Race 6)), this protein is Phosphoribosyl-AMP cyclohydrolase.